A 302-amino-acid chain; its full sequence is Aliphatic sulfonates import ATP-binding protein SsuB (302 aa).

Residues 30–57 are compositionally biased toward low complexity; it reads PATADAQHTADAQHTADAQHTADAQHTA. A disordered region spans residues 30–65; sequence PATADAQHTADAQHTADAQHTADAQHTAETAETRGA. Positions 70 to 284 constitute an ABC transporter domain; sequence IRIRGLRRTF…RRTDPAFDRL (215 aa). 102-109 is a binding site for ATP; that stretch reads GRSGSGKS.

The protein belongs to the ABC transporter superfamily. Aliphatic sulfonates importer (TC 3.A.1.17.2) family. The complex is composed of two ATP-binding proteins (SsuB), two transmembrane proteins (SsuC) and a solute-binding protein (SsuA).

Its subcellular location is the cell membrane. The enzyme catalyses ATP + H2O + aliphatic sulfonate-[sulfonate-binding protein]Side 1 = ADP + phosphate + aliphatic sulfonateSide 2 + [sulfonate-binding protein]Side 1.. In terms of biological role, part of the ABC transporter complex SsuABC involved in aliphatic sulfonates import. Responsible for energy coupling to the transport system. The chain is Aliphatic sulfonates import ATP-binding protein SsuB from Frankia casuarinae (strain DSM 45818 / CECT 9043 / HFP020203 / CcI3).